The chain runs to 166 residues: MAQEDVTAVATNGAGPVETHLVFTEFKQMLLVEAQKVGDAVTFYKSAFGAIESGHSLYPKRKLDQELPHVLSSELNLAGSSFVVCDVSSLPGFSTAKSEGSGVTFLLGTKDAEAAVAKAVDAGAVKVEVTEAEVELGFKGKVTDPFGVTWIFAEKKTVITDENKEV.

An N-acetylalanine modification is found at Ala-2.

Homodimer.

This is an uncharacterized protein from Arabidopsis thaliana (Mouse-ear cress).